The chain runs to 433 residues: 5-methylthioadenosine/S-adenosylhomocysteine deaminase (433 aa).

Zn(2+) is bound by residues histidine 62 and histidine 64. The substrate site is built by glutamate 91, arginine 143, and histidine 183. Histidine 210 contacts Zn(2+). Substrate is bound by residues glutamate 213 and aspartate 298. A Zn(2+)-binding site is contributed by aspartate 298.

It belongs to the metallo-dependent hydrolases superfamily. MTA/SAH deaminase family. It depends on Zn(2+) as a cofactor.

It catalyses the reaction S-adenosyl-L-homocysteine + H2O + H(+) = S-inosyl-L-homocysteine + NH4(+). It carries out the reaction S-methyl-5'-thioadenosine + H2O + H(+) = S-methyl-5'-thioinosine + NH4(+). In terms of biological role, catalyzes the deamination of 5-methylthioadenosine and S-adenosyl-L-homocysteine into 5-methylthioinosine and S-inosyl-L-homocysteine, respectively. Is also able to deaminate adenosine. The polypeptide is 5-methylthioadenosine/S-adenosylhomocysteine deaminase (Caldanaerobacter subterraneus subsp. tengcongensis (strain DSM 15242 / JCM 11007 / NBRC 100824 / MB4) (Thermoanaerobacter tengcongensis)).